We begin with the raw amino-acid sequence, 284 residues long: D-tagatose-1,6-bisphosphate aldolase subunit GatY (284 aa).

Residue aspartate 82 is the Proton donor of the active site. Zn(2+) contacts are provided by histidine 83 and histidine 180. A dihydroxyacetone phosphate-binding site is contributed by glycine 181. Histidine 208 provides a ligand contact to Zn(2+). Dihydroxyacetone phosphate-binding positions include 209–211 (GAS) and 230–233 (NVAT).

This sequence belongs to the class II fructose-bisphosphate aldolase family. TagBP aldolase GatY subfamily. Forms a complex with GatZ. Zn(2+) serves as cofactor.

The catalysed reaction is D-tagatofuranose 1,6-bisphosphate = D-glyceraldehyde 3-phosphate + dihydroxyacetone phosphate. The protein operates within carbohydrate metabolism; D-tagatose 6-phosphate degradation; D-glyceraldehyde 3-phosphate and glycerone phosphate from D-tagatose 6-phosphate: step 2/2. In terms of biological role, catalytic subunit of the tagatose-1,6-bisphosphate aldolase GatYZ, which catalyzes the reversible aldol condensation of dihydroxyacetone phosphate (DHAP or glycerone-phosphate) with glyceraldehyde 3-phosphate (G3P) to produce tagatose 1,6-bisphosphate (TBP). Requires GatZ subunit for full activity and stability. Is involved in the catabolism of galactitol. This is D-tagatose-1,6-bisphosphate aldolase subunit GatY (gatY) from Escherichia coli.